A 738-amino-acid polypeptide reads, in one-letter code: Flagellar radial spoke protein 2 (738 aa).

Arg-104 carries the post-translational modification Asymmetric dimethylarginine. Composition is skewed to acidic residues over residues 134–153 (PDWVAPEDDEAAAVETEDEA) and 161–182 (EGEEPPPEPEPEPEAAPEDGEG). Positions 134 to 189 (PDWVAPEDDEAAAVETEDEAAGGAALAEGEEPPPEPEPEPEAAPEDGEGDAPAPKI) are disordered. The residue at position 260 (Arg-260) is an Asymmetric dimethylarginine. The interval 357 to 426 (AAAEAAAAAP…PPKPKKKKKV (70 aa)) is disordered. A compositionally biased stretch (acidic residues) spans 371 to 415 (EGEEGEGEAPPAEEEPPAEEEAEEEEEEAEEGAEEGAEEGEEGEE). Residues Arg-453, Arg-538, and Arg-615 each carry the asymmetric dimethylarginine modification. A disordered region spans residues 674–738 (AEAGEGEAVA…SSEESKAAAE (65 aa)). The segment covering 689-730 (PAEAEAAPAEGEAAPPAEGEGEAQPAQEGSNSSSSSSDSSSS) has biased composition (low complexity).

It belongs to the dpy-30 family. Asymmetrically dimethylated at Arg-104, Arg-260, Arg-453, Arg-538 and Arg-615 during flagellum resorption. Probably methylated by PRMT1.

It localises to the cytoplasm. It is found in the cytoskeleton. Its subcellular location is the flagellum axoneme. Its function is as follows. Flagellar radial spokes contribute to the regulation of dynein arm activity and thus the pattern of flagellar bending. They consist of a thin stalk, which is attached to the a subfiber of the outer doublet microtubule, and a bulbous head, which is attached to the stalk and appears to interact with the projections from the central pair of microtubules. Binds calmodulin in a calcium-dependent manner. The protein is Flagellar radial spoke protein 2 of Chlamydomonas reinhardtii (Chlamydomonas smithii).